Reading from the N-terminus, the 206-residue chain is FMN-dependent NADH:quinone oxidoreductase (206 aa).

FMN is bound by residues 15 to 17 (SVS), 94 to 97 (MYNF), and 138 to 141 (TRGG).

The protein belongs to the azoreductase type 1 family. Homodimer. Requires FMN as cofactor.

It carries out the reaction 2 a quinone + NADH + H(+) = 2 a 1,4-benzosemiquinone + NAD(+). It catalyses the reaction N,N-dimethyl-1,4-phenylenediamine + anthranilate + 2 NAD(+) = 2-(4-dimethylaminophenyl)diazenylbenzoate + 2 NADH + 2 H(+). Functionally, quinone reductase that provides resistance to thiol-specific stress caused by electrophilic quinones. In terms of biological role, also exhibits azoreductase activity. Catalyzes the reductive cleavage of the azo bond in aromatic azo compounds to the corresponding amines. The polypeptide is FMN-dependent NADH:quinone oxidoreductase (Sinorhizobium fredii (strain NBRC 101917 / NGR234)).